A 472-amino-acid chain; its full sequence is Probable diguanylate cyclase DgcF (472 aa).

8 helical membrane-spanning segments follow: residues 21-41 (SIAIFALTTLFYFIGAELRLV), 44-64 (LSLFWPLNGVMAGVFARYVWL), 90-110 (VSLAINFSNMMFIVTVALLVV), 128-148 (LFNYCLIAALLCAIVGAIGSV), 167-187 (FSTGVLIVPCMLTLAIPGVLP), 198-218 (IALIVSVIASVVIGGAGSLAF), 237-257 (LLTFVTGAVEIVLVANSVIDI), and 273-293 (LGIATMAICPIMVSFSVAAIN). The GGDEF domain occupies 330-467 (QHLTVMLLDI…GRNRTSTMRY (138 aa)). D338 and I339 together coordinate Mg(2+). Substrate contacts are provided by N346, H351, and D355. A Mg(2+)-binding site is contributed by E381.

Homodimer. Requires Mg(2+) as cofactor.

It localises to the cell membrane. The enzyme catalyses 2 GTP = 3',3'-c-di-GMP + 2 diphosphate. The protein operates within purine metabolism; 3',5'-cyclic di-GMP biosynthesis. In terms of biological role, catalyzes the synthesis of cyclic-di-GMP (c-di-GMP) via the condensation of 2 GTP molecules. In Escherichia coli O157:H7, this protein is Probable diguanylate cyclase DgcF.